The primary structure comprises 427 residues: Acetylornithine aminotransferase, mitochondrial (427 aa).

At lysine 279 the chain carries N6-(pyridoxal phosphate)lysine.

This sequence belongs to the class-III pyridoxal-phosphate-dependent aminotransferase family. Pyridoxal 5'-phosphate is required as a cofactor.

It localises to the mitochondrion matrix. It catalyses the reaction N(2)-acetyl-L-ornithine + 2-oxoglutarate = N-acetyl-L-glutamate 5-semialdehyde + L-glutamate. Its pathway is amino-acid biosynthesis; L-arginine biosynthesis; N(2)-acetyl-L-ornithine from L-glutamate: step 4/4. This is Acetylornithine aminotransferase, mitochondrial (ARG8) from Candida glabrata (strain ATCC 2001 / BCRC 20586 / JCM 3761 / NBRC 0622 / NRRL Y-65 / CBS 138) (Yeast).